Here is a 521-residue protein sequence, read N- to C-terminus: AAA ATPase forming ring-shaped complexes (521 aa).

A coiled-coil region spans residues 4-44 (TEDLAALNDRLMAKNHALAEALNRAGKELTKAKSRLAQLAQ). 235–240 (GNGKTM) contacts ATP.

The protein belongs to the AAA ATPase family. Homohexamer. Assembles into a hexameric ring structure.

The protein is AAA ATPase forming ring-shaped complexes of Bifidobacterium longum subsp. infantis (strain ATCC 15697 / DSM 20088 / JCM 1222 / NCTC 11817 / S12).